We begin with the raw amino-acid sequence, 177 residues long: Inorganic pyrophosphatase (177 aa).

The substrate site is built by lysine 31, arginine 45, and tyrosine 57. Residues aspartate 67, aspartate 72, and aspartate 104 each contribute to the Mg(2+) site. Tyrosine 142 lines the substrate pocket.

This sequence belongs to the PPase family. Homohexamer. It depends on Mg(2+) as a cofactor.

It is found in the cytoplasm. It carries out the reaction diphosphate + H2O = 2 phosphate + H(+). Catalyzes the hydrolysis of inorganic pyrophosphate (PPi) forming two phosphate ions. This Neisseria meningitidis serogroup A / serotype 4A (strain DSM 15465 / Z2491) protein is Inorganic pyrophosphatase.